Reading from the N-terminus, the 65-residue chain is Large ribosomal subunit protein uL29 (65 aa).

Belongs to the universal ribosomal protein uL29 family.

This is Large ribosomal subunit protein uL29 (rpmC) from Borreliella burgdorferi (strain ATCC 35210 / DSM 4680 / CIP 102532 / B31) (Borrelia burgdorferi).